A 719-amino-acid chain; its full sequence is DNA replication licensing factor MCM7 (719 aa).

The residue at position 2 (A2) is an N-acetylalanine. Glycyl lysine isopeptide (Lys-Gly) (interchain with G-Cter in SUMO2) cross-links involve residues K15 and K28. The residue at position 314 (S314) is a Phosphoserine. The MCM domain maps to 332-538 (FYEKLAASIA…NDLRLAQHIT (207 aa)). Y345 is an ATP binding site. S365 is subject to Phosphoserine. Positions 384, 386, 387, 388, and 489 each coordinate ATP. S500 carries the post-translational modification Phosphoserine. The Arginine finger motif lies at 513–516 (SRFD). ATP is bound at residue R514. The interval 521 to 564 (IQDRPDRDNDLRLAQHITYVHQHSRQPPAQFEPLDMKLMRRYIA) is interaction with RAD17. Positions 577-719 (LADYITAAYV…NTSRTRITFV (143 aa)) are interaction with ATRIP. Residue R604 participates in ATP binding. At S678 the chain carries Phosphoserine.

This sequence belongs to the MCM family. Component of the MCM2-7 complex. The complex forms a toroidal hexameric ring with the proposed subunit order MCM2-MCM6-MCM4-MCM7-MCM3-MCM5. Component of the CMG helicase complex, a hexameric ring of related MCM2-7 subunits stabilized by CDC45 and the tetrameric GINS complex. Interacts with the ATR-ATRIP complex and with RAD17. Interacts with TIPIN. Interacts with MCMBP. Interacts with ANKRD17. Component of the replisome complex composed of at least DONSON, MCM2, MCM7, PCNA and TICRR. O-glycosylated (O-GlcNAcylated), in a cell cycle-dependent manner. In terms of processing, ubiquitinated by ECS(LRR1) E3 ubiquitin-protein ligase complex when forks converge following formation of DNA interstrand cross-links. During mitosis, ubiquitinated by TRAIP when forks converge following formation of DNA interstrand cross-links. Short ubiquitin chains on MCM7 promote recruitment of DNA glycosylase NEIL3. If the interstrand cross-link cannot be cleaved by NEIL3, the ubiquitin chains continue to grow on MCM7, promoting the unloading of the CMG helicase complex by the VCP/p97 ATPase.

The protein resides in the nucleus. It is found in the chromosome. The enzyme catalyses ATP + H2O = ADP + phosphate + H(+). Acts as a component of the MCM2-7 complex (MCM complex) which is the replicative helicase essential for 'once per cell cycle' DNA replication initiation and elongation in eukaryotic cells. Core component of CDC45-MCM-GINS (CMG) helicase, the molecular machine that unwinds template DNA during replication, and around which the replisome is built. The active ATPase sites in the MCM2-7 ring are formed through the interaction surfaces of two neighboring subunits such that a critical structure of a conserved arginine finger motif is provided in trans relative to the ATP-binding site of the Walker A box of the adjacent subunit. The six ATPase active sites, however, are likely to contribute differentially to the complex helicase activity. Uncomplexed form does not show ATPase or DNA helicase. Required for S-phase checkpoint activation upon UV-induced damage. This chain is DNA replication licensing factor MCM7 (Mcm7), found in Mus musculus (Mouse).